The chain runs to 184 residues: Holliday junction branch migration complex subunit RuvA (184 aa).

A domain I region spans residues Met-1–Ala-61. The domain II stretch occupies residues Asp-62–Gln-135. Residue Gln-135 is a region of interest, flexible linker. The segment at Gln-135–Lys-184 is domain III.

It belongs to the RuvA family. Homotetramer. Forms an RuvA(8)-RuvB(12)-Holliday junction (HJ) complex. HJ DNA is sandwiched between 2 RuvA tetramers; dsDNA enters through RuvA and exits via RuvB. An RuvB hexamer assembles on each DNA strand where it exits the tetramer. Each RuvB hexamer is contacted by two RuvA subunits (via domain III) on 2 adjacent RuvB subunits; this complex drives branch migration. In the full resolvosome a probable DNA-RuvA(4)-RuvB(12)-RuvC(2) complex forms which resolves the HJ.

Its subcellular location is the cytoplasm. Functionally, the RuvA-RuvB-RuvC complex processes Holliday junction (HJ) DNA during genetic recombination and DNA repair, while the RuvA-RuvB complex plays an important role in the rescue of blocked DNA replication forks via replication fork reversal (RFR). RuvA specifically binds to HJ cruciform DNA, conferring on it an open structure. The RuvB hexamer acts as an ATP-dependent pump, pulling dsDNA into and through the RuvAB complex. HJ branch migration allows RuvC to scan DNA until it finds its consensus sequence, where it cleaves and resolves the cruciform DNA. In Nautilia profundicola (strain ATCC BAA-1463 / DSM 18972 / AmH), this protein is Holliday junction branch migration complex subunit RuvA.